The primary structure comprises 174 residues: NADH-ubiquinone oxidoreductase chain 6 (174 aa).

Transmembrane regions (helical) follow at residues 24–44, 53–73, 82–102, and 143–163; these read LALGLTLLIQTIFVCLLSGLM, ILFLIFLGGMLVLFIYVTSLA, IKLTLFSMFILFFMFILSMIL, and FVTILLMNYLLITLIVVVKIT.

Belongs to the complex I subunit 6 family.

The protein localises to the mitochondrion membrane. The catalysed reaction is a ubiquinone + NADH + 5 H(+)(in) = a ubiquinol + NAD(+) + 4 H(+)(out). Functionally, core subunit of the mitochondrial membrane respiratory chain NADH dehydrogenase (Complex I) that is believed to belong to the minimal assembly required for catalysis. Complex I functions in the transfer of electrons from NADH to the respiratory chain. The immediate electron acceptor for the enzyme is believed to be ubiquinone. The protein is NADH-ubiquinone oxidoreductase chain 6 (mt:ND6) of Drosophila yakuba (Fruit fly).